The following is a 557-amino-acid chain: Probable protein kinase UbiB (557 aa).

A Protein kinase domain is found at 121-509 (AFDTTPLASA…RKLQTRVVTA (389 aa)). ATP-binding positions include 127–135 (LASASIAQV) and lysine 154. Residue aspartate 289 is the Proton acceptor of the active site. The next 2 membrane-spanning stretches (helical) occupy residues 506-526 (VVTA…YGLH) and 535-555 (VPVW…IAWL).

This sequence belongs to the ABC1 family. UbiB subfamily.

It localises to the cell inner membrane. Its pathway is cofactor biosynthesis; ubiquinone biosynthesis [regulation]. Functionally, is probably a protein kinase regulator of UbiI activity which is involved in aerobic coenzyme Q (ubiquinone) biosynthesis. This is Probable protein kinase UbiB from Xanthomonas campestris pv. campestris (strain 8004).